Reading from the N-terminus, the 126-residue chain is Fluoride-specific ion channel FluC (126 aa).

A run of 4 helical transmembrane segments spans residues 4-24 (SLLSIACGAVLGAWLRWFVGL), 35-55 (LGTILVNLVGGFIIGFAIALF), 67-87 (FVITGFCGALTTFSTFSAEVI), and 97-117 (FAIALITIHLMGSLLCTVLGL). Positions 74 and 77 each coordinate Na(+).

Belongs to the fluoride channel Fluc/FEX (TC 1.A.43) family.

It localises to the cell inner membrane. It carries out the reaction fluoride(in) = fluoride(out). With respect to regulation, na(+) is not transported, but it plays an essential structural role and its presence is essential for fluoride channel function. Fluoride-specific ion channel. Important for reducing fluoride concentration in the cell, thus reducing its toxicity. This chain is Fluoride-specific ion channel FluC, found in Acinetobacter baylyi (strain ATCC 33305 / BD413 / ADP1).